A 156-amino-acid polypeptide reads, in one-letter code: Small ribosomal subunit protein uS7 (156 aa).

Belongs to the universal ribosomal protein uS7 family. As to quaternary structure, part of the 30S ribosomal subunit. Contacts proteins S9 and S11.

In terms of biological role, one of the primary rRNA binding proteins, it binds directly to 16S rRNA where it nucleates assembly of the head domain of the 30S subunit. Is located at the subunit interface close to the decoding center, probably blocks exit of the E-site tRNA. In Herminiimonas arsenicoxydans, this protein is Small ribosomal subunit protein uS7.